Reading from the N-terminus, the 343-residue chain is Fructose-1,6-bisphosphatase class 1 (343 aa).

Glutamate 91, aspartate 113, isoleucine 115, and aspartate 116 together coordinate Mg(2+). Substrate is bound by residues 116–119 (DGSS), asparagine 210, and lysine 276. Glutamate 282 contributes to the Mg(2+) binding site.

Belongs to the FBPase class 1 family. In terms of assembly, homotetramer. The cofactor is Mg(2+).

The protein resides in the cytoplasm. The enzyme catalyses beta-D-fructose 1,6-bisphosphate + H2O = beta-D-fructose 6-phosphate + phosphate. It functions in the pathway carbohydrate biosynthesis; gluconeogenesis. The protein is Fructose-1,6-bisphosphatase class 1 of Parvibaculum lavamentivorans (strain DS-1 / DSM 13023 / NCIMB 13966).